Here is a 471-residue protein sequence, read N- to C-terminus: 7-dehydrocholesterol reductase (471 aa).

A disordered region spans residues 1–23 (MASKSQHNAPKVKSPNGKAGSQG). A Phosphoserine modification is found at Ser-14. 8 helical membrane passes run 36–56 (LASI…FIMA), 95–115 (LYAL…DFCH), 144–164 (LQAW…LSWF), 173–193 (WIPL…FAMI), 233–253 (LFFN…SFAA), 262–282 (VTNS…DFFW), 302–322 (LGWG…LYLV), and 327–347 (QLST…YYIF). NADP(+)-binding positions include Lys-354, Arg-358, Leu-391, Trp-396, and 403–404 (NY). A helical transmembrane segment spans residues 416 to 436 (LACGGGHLLPYFYIIYMTILL). NADP(+) contacts are provided by residues Asp-443, 447–451 (CANKY), and Tyr-458.

It belongs to the ERG4/ERG24 family. As to quaternary structure, interacts with DHCR24; this interaction regulates DHCR7 activity. Interacts with TMEM147.

It is found in the endoplasmic reticulum membrane. It carries out the reaction cholesterol + NADP(+) = 7-dehydrocholesterol + NADPH + H(+). The catalysed reaction is 7-dehydrodesmosterol + NADPH + H(+) = desmosterol + NADP(+). It catalyses the reaction 5,6alpha-epoxy-5alpha-cholestan-3beta-ol + H2O = 5alpha-cholestane-3beta,5,6beta-triol. The enzyme catalyses 5,6beta-epoxy-5beta-cholestan-3beta-ol + H2O = 5alpha-cholestane-3beta,5,6beta-triol. Its pathway is steroid biosynthesis; cholesterol biosynthesis. Functionally, oxidoreductase that catalyzes the last step of the cholesterol synthesis pathway, which transforms cholesta-5,7-dien-3beta-ol (7-dehydrocholesterol,7-DHC) into cholesterol by reducing the C7-C8 double bond of its sterol core. Can also metabolize cholesta-5,7,24-trien-3beta-ol (7-dehydrodemosterol, 7-DHD) to desmosterol, which is then metabolized by the Delta(24)-sterol reductase (DHCR24) to cholesterol. Modulates ferroptosis (a form of regulated cell death driven by iron-dependent lipid peroxidation) through the metabolic breakdown of the anti-ferroptotic metabolites 7-DHC and 7-DHD which, when accumulated, divert the propagation of peroxyl radical-mediated damage from phospholipid components to its sterol core, protecting plasma and mitochondrial membranes from phospholipid autoxidation. Component of the microsomal antiestrogen binding site (AEBS), a multiproteic complex at the ER membrane that consists of an association between cholestenol Delta-isomerase/EBP and DHCR7. This complex is responsible for cholesterol-5,6-epoxide hydrolase (ChEH) activity, which consists in the hydration of cholesterol-5,6-epoxides (5,6-EC) into cholestane-3beta,5alpha,6beta-triol (CT). The precise role of each component of this complex has not been described yet. The chain is 7-dehydrocholesterol reductase (Dhcr7) from Mus musculus (Mouse).